The sequence spans 574 residues: MEINNSNNNNNYVCAQHNRIEHANHHDLPDSDSDSSSREEELMNSSGGGNGKEPIGEKKKLPSHISEVISNERRESIIRELQQIKTISDYPSQANQYNLIEPIGEGTEGRVFKAYCIPLKENVAIKVVELDKMDPQFVKDVIKEVKVMNGNNHPNLIHYHTSFLENNQLWLVMDYLGGGSLADIMKFKYPDGIPEVLAVTVLKSLLKGLEYLHSHQRIHRDLKSDNILIGEDGAIELADFGVSAMFEKNTCCSRKTIVGTPCWMAPEIISERGYNQGVDIWSFGITAIELIRGKPPGYDLPPSKVFMNLLFGNSPSLQEEEDKGVCSHLYKDLVDKCLQKEPSKRPNASKLLEHKVFKQAKKNNYIVSHLLHGLTPCEDRYRESMSPASSNTPSPDSSRPSSPEHYNHGNVVNSPLQKNIKPSSLNKSSSSLELKNKNLSNPDLVNMPRAASHPVELNALELSSGSGPLSQSSDLPHGHLHKIGTPKKKHSPSGSIGDSHGSISPPLSTSPEKERKKGFFNHFRRHSIAKLFGSPKEGDHNHQHHKSEGDHEHHHFHFPWKHHHHSSSNNHVET.

Positions asparagine 24–glutamate 41 are enriched in basic and acidic residues. A disordered region spans residues asparagine 24–histidine 64. Residues tyrosine 97–phenylalanine 357 form the Protein kinase domain. ATP-binding positions include isoleucine 103–valine 111 and lysine 126. Aspartate 221 functions as the Proton acceptor in the catalytic mechanism. Threonine 256 bears the Phosphothreonine; by autocatalysis mark. Disordered stretches follow at residues tyrosine 381–methionine 447, leucine 462–glutamate 514, and phenylalanine 532–histidine 554. Low complexity-rich tracts occupy residues serine 386 to proline 403, lysine 418 to asparagine 441, and leucine 462 to leucine 475. Basic residues predominate over residues glycine 478–serine 491. The segment covering proline 492–proline 506 has biased composition (low complexity). Over residues lysine 536–histidine 553 the composition is skewed to basic and acidic residues.

Belongs to the protein kinase superfamily. STE Ser/Thr protein kinase family. STE20 subfamily. The cofactor is Mn(2+). In terms of processing, undergoes autophosphorylation in the catalytic domain.

The enzyme catalyses L-seryl-[protein] + ATP = O-phospho-L-seryl-[protein] + ADP + H(+). The catalysed reaction is L-threonyl-[protein] + ATP = O-phospho-L-threonyl-[protein] + ADP + H(+). The sequence is that of Serine/threonine-protein kinase fray1 from Dictyostelium discoideum (Social amoeba).